Reading from the N-terminus, the 296-residue chain is uncharacterized protein (296 aa).

An FAD-binding FR-type domain is found at Met-1–Phe-95.

This is an uncharacterized protein from Clostridium beijerinckii (Clostridium MP).